A 103-amino-acid polypeptide reads, in one-letter code: Large ribosomal subunit protein uL24 (103 aa).

This sequence belongs to the universal ribosomal protein uL24 family. As to quaternary structure, part of the 50S ribosomal subunit.

One of two assembly initiator proteins, it binds directly to the 5'-end of the 23S rRNA, where it nucleates assembly of the 50S subunit. Its function is as follows. One of the proteins that surrounds the polypeptide exit tunnel on the outside of the subunit. The protein is Large ribosomal subunit protein uL24 of Geobacillus stearothermophilus (Bacillus stearothermophilus).